The sequence spans 447 residues: Na(+)-translocating NADH-quinone reductase subunit A (447 aa).

It belongs to the NqrA family. Composed of six subunits; NqrA, NqrB, NqrC, NqrD, NqrE and NqrF.

The enzyme catalyses a ubiquinone + n Na(+)(in) + NADH + H(+) = a ubiquinol + n Na(+)(out) + NAD(+). NQR complex catalyzes the reduction of ubiquinone-1 to ubiquinol by two successive reactions, coupled with the transport of Na(+) ions from the cytoplasm to the periplasm. NqrA to NqrE are probably involved in the second step, the conversion of ubisemiquinone to ubiquinol. This Saccharophagus degradans (strain 2-40 / ATCC 43961 / DSM 17024) protein is Na(+)-translocating NADH-quinone reductase subunit A.